A 502-amino-acid chain; its full sequence is Lysine--tRNA ligase (502 aa).

Positions 411 and 418 each coordinate Mg(2+).

This sequence belongs to the class-II aminoacyl-tRNA synthetase family. In terms of assembly, homodimer. The cofactor is Mg(2+).

Its subcellular location is the cytoplasm. The catalysed reaction is tRNA(Lys) + L-lysine + ATP = L-lysyl-tRNA(Lys) + AMP + diphosphate. The chain is Lysine--tRNA ligase from Chromohalobacter salexigens (strain ATCC BAA-138 / DSM 3043 / CIP 106854 / NCIMB 13768 / 1H11).